Here is a 222-residue protein sequence, read N- to C-terminus: Exosome complex component Rrp4 (222 aa).

The region spanning 63–131 (GDLVIGRVTG…EINRVKLTLR (69 aa)) is the S1 motif domain.

It belongs to the RRP4 family. As to quaternary structure, component of the archaeal exosome complex. Forms a trimer of Rrp4 and/or Csl4 subunits. The trimer associates with a hexameric ring-like arrangement composed of 3 Rrp41-Rrp42 heterodimers.

It is found in the cytoplasm. Non-catalytic component of the exosome, which is a complex involved in RNA degradation. Increases the RNA binding and the efficiency of RNA degradation. Confers strong poly(A) specificity to the exosome. This chain is Exosome complex component Rrp4, found in Methanosphaera stadtmanae (strain ATCC 43021 / DSM 3091 / JCM 11832 / MCB-3).